Reading from the N-terminus, the 202-residue chain is ATP-dependent Clp protease proteolytic subunit 1 (202 aa).

Ser-101 functions as the Nucleophile in the catalytic mechanism. Residue His-126 is part of the active site.

This sequence belongs to the peptidase S14 family. In terms of assembly, fourteen ClpP subunits assemble into 2 heptameric rings which stack back to back to give a disk-like structure with a central cavity, resembling the structure of eukaryotic proteasomes.

The protein resides in the cytoplasm. The catalysed reaction is Hydrolysis of proteins to small peptides in the presence of ATP and magnesium. alpha-casein is the usual test substrate. In the absence of ATP, only oligopeptides shorter than five residues are hydrolyzed (such as succinyl-Leu-Tyr-|-NHMec, and Leu-Tyr-Leu-|-Tyr-Trp, in which cleavage of the -Tyr-|-Leu- and -Tyr-|-Trp bonds also occurs).. Its function is as follows. Cleaves peptides in various proteins in a process that requires ATP hydrolysis. Has a chymotrypsin-like activity. Plays a major role in the degradation of misfolded proteins. The protein is ATP-dependent Clp protease proteolytic subunit 1 of Rhizobium etli (strain ATCC 51251 / DSM 11541 / JCM 21823 / NBRC 15573 / CFN 42).